Reading from the N-terminus, the 506-residue chain is Sodium-coupled neutral amino acid symporter 2 (506 aa).

A disordered region spans residues 1–23 (MKKAEMGRFNISPDEDSSSYSSN). At 1 to 76 (MKKAEMGRFN…HPGTTSFGMS (76 aa)) the chain is on the cytoplasmic side. The interval 1 to 96 (MKKAEMGRFN…SGILGLSYAM (96 aa)) is regulates protein turnover upon amino acid deprivation. Phosphoserine is present on residues Ser12, Ser21, Ser22, and Ser55. Residues 77–96 (VFNLSNAIVGSGILGLSYAM) form a helical membrane-spanning segment. Residue Asn82 coordinates Na(+). The Extracellular portion of the chain corresponds to 97–102 (ANTGIA). The chain crosses the membrane as a helical span at residues 103–123 (LFIILLTFVSIFSLYSVHLLL). Topologically, residues 124–158 (KTANEGGSLLYEQLGHKAFGMVGKLTASGSITMQN) are cytoplasmic. The helical transmembrane segment at 159–177 (IGAMSSYLFIVKYELPLVI) threads the bilayer. At 178–188 (QALMNIEDTNG) the chain is on the extracellular side. Residues 189–209 (LWYLNGDYLVLLVSLVLILPL) traverse the membrane as a helical segment. Topologically, residues 210–217 (SLLRNLGY) are cytoplasmic. The chain crosses the membrane as a helical span at residues 218–238 (LGYTSGLSLLCMMFFLIVVIF). The Extracellular segment spans residues 239–292 (KKFQISCPAEIAFLVNETVNSSLTQPATFLPDMGFNRTESDSCQPRYFIFNSQT). The cysteines at positions 245 and 281 are disulfide-linked. N-linked (GlcNAc...) asparagine glycosylation is found at Asn258 and Asn274. Residues 293-313 (VYAVPILTFSFVCHPAILPIY) traverse the membrane as a helical segment. Topologically, residues 314–329 (EELKGRSRRRMMNVSK) are cytoplasmic. Residues 330-350 (ISFFAMFLMYLLAALFGYLTF) form a helical membrane-spanning segment. At 351-371 (YGHVESELLHTYSSVMETDIL) the chain is on the extracellular side. The helical transmembrane segment at 372–392 (LLIVRLAVLVAVTLTVPVVIF) threads the bilayer. Na(+) is bound at residue Thr386. Residues 393–413 (PIRSSITHLLCASKEFSWWRH) are Cytoplasmic-facing. Residues 414 to 434 (SVITVSILVFTNLLVIFVPNI) traverse the membrane as a helical segment. Topologically, residues 435–436 (RD) are extracellular. A helical transmembrane segment spans residues 437 to 457 (IFGFIGASAAAMLIFILPSAF). Residues 458 to 472 (YIKLVKKEPMKSVQK) lie on the Cytoplasmic side of the membrane. The chain crosses the membrane as a helical span at residues 473 to 495 (IGAMFFLLSGIVVMTGSMALIVL). The Extracellular segment spans residues 496–506 (DWVHNAPGGGH).

Belongs to the amino acid/polyamine transporter 2 family. Polyubiquitination by NEDD4L regulates the degradation and the activity of SLC38A2.

It localises to the cell membrane. The catalysed reaction is L-alanine(in) + Na(+)(in) = L-alanine(out) + Na(+)(out). The enzyme catalyses glycine(in) + Na(+)(in) = glycine(out) + Na(+)(out). It catalyses the reaction L-serine(in) + Na(+)(in) = L-serine(out) + Na(+)(out). It carries out the reaction L-proline(in) + Na(+)(in) = L-proline(out) + Na(+)(out). The catalysed reaction is L-methionine(in) + Na(+)(in) = L-methionine(out) + Na(+)(out). The enzyme catalyses L-histidine(in) + Na(+)(in) = L-histidine(out) + Na(+)(out). It catalyses the reaction L-asparagine(in) + Na(+)(in) = L-asparagine(out) + Na(+)(out). It carries out the reaction L-glutamine(in) + Na(+)(in) = L-glutamine(out) + Na(+)(out). The catalysed reaction is L-threonine(in) + Na(+)(in) = L-threonine(out) + Na(+)(out). The enzyme catalyses L-leucine(in) + Na(+)(in) = L-leucine(out) + Na(+)(out). It catalyses the reaction L-phenylalanine(in) + Na(+)(in) = L-phenylalanine(out) + Na(+)(out). Its activity is regulated as follows. Inhibited by N-methyl-D-glucamine. Inhibited by choline. Allosteric regulation of sodium ions binding by pH. Functionally, symporter that cotransports neutral amino acids and sodium ions from the extracellular to the intracellular side of the cell membrane. The transport is pH-sensitive, Li(+)-intolerant, electrogenic, driven by the Na(+) electrochemical gradient and cotransports of neutral amino acids and sodium ions with a stoichiometry of 1:1. May function in the transport of amino acids at the blood-brain barrier. May function in the transport of amino acids in the supply of maternal nutrients to the fetus through the placenta. Maintains a key metabolic glutamine/glutamate balance underpinning retrograde signaling by dendritic release of the neurotransmitter glutamate. Transports L-proline in differentiating osteoblasts for the efficient synthesis of proline-enriched proteins and provides proline essential for osteoblast differentiation and bone formation during bone development. The protein is Sodium-coupled neutral amino acid symporter 2 of Bos taurus (Bovine).